Consider the following 107-residue polypeptide: Anti-adapter protein IraM (107 aa).

Belongs to the IraM/RssC family.

It localises to the cytoplasm. Functionally, inhibits RpoS proteolysis by regulating RssB activity, thereby increasing the stability of the sigma stress factor RpoS during magnesium starvation. This Shigella dysenteriae serotype 1 (strain Sd197) protein is Anti-adapter protein IraM.